Here is a 144-residue protein sequence, read N- to C-terminus: D-aminoacyl-tRNA deacylase (144 aa).

Residues 136–137 (GP) carry the Gly-cisPro motif, important for rejection of L-amino acids motif.

The protein belongs to the DTD family. As to quaternary structure, homodimer.

Its subcellular location is the cytoplasm. The catalysed reaction is glycyl-tRNA(Ala) + H2O = tRNA(Ala) + glycine + H(+). It catalyses the reaction a D-aminoacyl-tRNA + H2O = a tRNA + a D-alpha-amino acid + H(+). Functionally, an aminoacyl-tRNA editing enzyme that deacylates mischarged D-aminoacyl-tRNAs. Also deacylates mischarged glycyl-tRNA(Ala), protecting cells against glycine mischarging by AlaRS. Acts via tRNA-based rather than protein-based catalysis; rejects L-amino acids rather than detecting D-amino acids in the active site. By recycling D-aminoacyl-tRNA to D-amino acids and free tRNA molecules, this enzyme counteracts the toxicity associated with the formation of D-aminoacyl-tRNA entities in vivo and helps enforce protein L-homochirality. The sequence is that of D-aminoacyl-tRNA deacylase from Haemophilus influenzae (strain PittEE).